A 703-amino-acid polypeptide reads, in one-letter code: Collagen alpha-2(VIII) chain (703 aa).

A signal peptide spans 1–28 (MLGTLTPLSSLLLLLLVLVLGCGPRASS). The interval 29-76 (GGGAGGAAGYAPVKYIQPMQKGPVGPPFREGKGQYLEMPLPLLPMDLK) is nonhelical region (NC2). Residues 70 to 544 (LLPMDLKGEP…AFDETGIAGL (475 aa)) form a disordered region. Residues 77 to 536 (GEPGPPGKPG…PGPPGAPGAF (460 aa)) are triple-helical region. Residues 79–97 (PGPPGKPGPRGPPGPPGFP) show a composition bias toward pro residues. Residues 166–192 (PSGITIPGKPGAQGVPGPPGFQGEPGP) show a composition bias toward low complexity. The segment covering 206-224 (GDNGVGQPGLPGAPGQGGA) has biased composition (gly residues). Low complexity-rich tracts occupy residues 265–275 (EPGAVGPKGPP) and 285–297 (AAGL…PSGA). Residues 433–442 (GRPGGPGVAG) are compositionally biased toward gly residues. Composition is skewed to low complexity over residues 444-462 (LGQK…RGPS) and 476-486 (PQGLPGLKGEP). The span at 506–532 (TGPPGVPGSPGITGPPGPPGPPGPPGA) shows a compositional bias: pro residues. The tract at residues 537–703 (DETGIAGLHL…SFSGFLLCPT (167 aa)) is nonhelical region (NC1). The region spanning 570–703 (SAHATPAFTA…SFSGFLLCPT (134 aa)) is the C1q domain.

As to quaternary structure, homotrimers, or heterotrimers in association with alpha 2(VIII) type collagens. Four homotrimers can form a tetrahedron stabilized by central interacting C-terminal NC1 trimers. Post-translationally, proteolytically cleaved by neutrophil elastase, in vitro. Prolines at the third position of the tripeptide repeating unit (G-X-Y) are hydroxylated in some or all of the chains. Expressed primarily in the subendothelium of large blood vessels. Also expressed in arterioles and venules in muscle, heart, kidney, spleen, umbilical cord, liver and lung and is also found in connective tissue layers around hair follicles, around nerve bundles in muscle, in the dura of the optic nerve, in cornea and sclera, and in the perichondrium of cartilaginous tissues. In the kidney, expressed in mesangial cells, glomerular endothelial cells, and tubular epithelial cells. Also expressed in mast cells, and in astrocytes during the repair process. Expressed in Descemet's membrane.

It localises to the secreted. The protein resides in the extracellular space. Its subcellular location is the extracellular matrix. It is found in the basement membrane. Its function is as follows. Macromolecular component of the subendothelium. Major component of the Descemet's membrane (basement membrane) of corneal endothelial cells. Also a component of the endothelia of blood vessels. Necessary for migration and proliferation of vascular smooth muscle cells and thus, has a potential role in the maintenance of vessel wall integrity and structure, in particular in atherogenesis. The protein is Collagen alpha-2(VIII) chain (COL8A2) of Homo sapiens (Human).